The chain runs to 576 residues: Proline--tRNA ligase (576 aa).

This sequence belongs to the class-II aminoacyl-tRNA synthetase family. ProS type 1 subfamily. As to quaternary structure, homodimer.

It localises to the cytoplasm. It catalyses the reaction tRNA(Pro) + L-proline + ATP = L-prolyl-tRNA(Pro) + AMP + diphosphate. Functionally, catalyzes the attachment of proline to tRNA(Pro) in a two-step reaction: proline is first activated by ATP to form Pro-AMP and then transferred to the acceptor end of tRNA(Pro). As ProRS can inadvertently accommodate and process non-cognate amino acids such as alanine and cysteine, to avoid such errors it has two additional distinct editing activities against alanine. One activity is designated as 'pretransfer' editing and involves the tRNA(Pro)-independent hydrolysis of activated Ala-AMP. The other activity is designated 'posttransfer' editing and involves deacylation of mischarged Ala-tRNA(Pro). The misacylated Cys-tRNA(Pro) is not edited by ProRS. This chain is Proline--tRNA ligase, found in Helicobacter pylori (strain J99 / ATCC 700824) (Campylobacter pylori J99).